The sequence spans 441 residues: Ribosomal protein uS12 methylthiotransferase RimO (441 aa).

The MTTase N-terminal domain occupies 8-118 (PKIGFVSLGC…VLQHVHHYVP (111 aa)). Residues Cys-17, Cys-53, Cys-82, Cys-150, Cys-154, and Cys-157 each contribute to the [4Fe-4S] cluster site. Residues 136-373 (LTPRHYAYLK…MQLQQQISAE (238 aa)) enclose the Radical SAM core domain. Residues 376–441 (QEKVGREILV…DEYDLWGSRV (66 aa)) form the TRAM domain.

The protein belongs to the methylthiotransferase family. RimO subfamily. It depends on [4Fe-4S] cluster as a cofactor.

The protein resides in the cytoplasm. The enzyme catalyses L-aspartate(89)-[ribosomal protein uS12]-hydrogen + (sulfur carrier)-SH + AH2 + 2 S-adenosyl-L-methionine = 3-methylsulfanyl-L-aspartate(89)-[ribosomal protein uS12]-hydrogen + (sulfur carrier)-H + 5'-deoxyadenosine + L-methionine + A + S-adenosyl-L-homocysteine + 2 H(+). Its function is as follows. Catalyzes the methylthiolation of an aspartic acid residue of ribosomal protein uS12. This is Ribosomal protein uS12 methylthiotransferase RimO from Salmonella heidelberg (strain SL476).